An 805-amino-acid polypeptide reads, in one-letter code: Angiotensin-converting enzyme 2 (805 aa).

The signal sequence occupies residues 1–17; it reads MSSSSWLLLSLVAVTAA. Residues 18 to 740 lie on the Extracellular side of the membrane; the sequence is QSTIEEQAKT…LGPPNQPPVS (723 aa). The Peptidase M2 domain maps to 19 to 607; sequence STIEEQAKTF…QNKNSFVGWS (589 aa). The segment at 30-41 is interaction with SARS-CoV spike glycoprotein; it reads DKFNHEAEDLFY. N53 carries N-linked (GlcNAc...) asparagine glycosylation. Residues 82–84 are interaction with SARS-CoV spike glycoprotein; the sequence is MYP. Residues N90 and N103 are each glycosylated (N-linked (GlcNAc...) asparagine). A disulfide bridge links C133 with C141. R169 is a binding site for chloride. R273 is a binding site for substrate. N322 is a glycosylation site (N-linked (GlcNAc...) asparagine). Cysteines 344 and 361 form a disulfide. A substrate-binding site is contributed by 345–346; sequence HP. The tract at residues 353 to 357 is interaction with SARS-CoV spike glycoprotein; that stretch reads KGDFR. H374 contributes to the Zn(2+) binding site. E375 (proton acceptor) is an active-site residue. H378 and E402 together coordinate Zn(2+). A glycan (N-linked (GlcNAc...) asparagine) is linked at N432. Chloride-binding residues include W477 and K481. H505 (proton donor) is an active-site residue. Y515 lines the substrate pocket. C530 and C542 form a disulfide bridge. N546 carries N-linked (GlcNAc...) asparagine glycosylation. Residues 614-805 form the Collectrin-like domain; the sequence is ADQSIKVRIS…QNTDDVQTSF (192 aa). Residues 652-659 form an essential for cleavage by ADAM17 region; sequence RQYFLKVK. A glycan (N-linked (GlcNAc...) asparagine) is linked at N690. The segment at 697–716 is essential for cleavage by TMPRSS11D and TMPRSS2; the sequence is RTEVEKAIRMSRSRINDAFR. The helical transmembrane segment at 741–761 threads the bilayer; it reads IWLIVFGVVMGVIVVGIVILI. The Cytoplasmic portion of the chain corresponds to 762 to 805; sequence FTGIRDRKKKNKARSGENPYASIDISKGENNPGFQNTDDVQTSF. The interval 772–805 is disordered; sequence NKARSGENPYASIDISKGENNPGFQNTDDVQTSF. An LIR motif is present at residues 778–786; sequence ENPYASIDI. The residue at position 781 (Y781) is a Phosphotyrosine. An Endocytic sorting signal motif is present at residues 781-784; that stretch reads YASI. The short motif at 781 to 785 is the SH2-binding element; it reads YASID. Phosphoserine is present on S783. K788 participates in a covalent cross-link: Glycyl lysine isopeptide (Lys-Gly) (interchain with G-Cter in ubiquitin). Residues 789-805 show a composition bias toward polar residues; that stretch reads GENNPGFQNTDDVQTSF. The short motif at 792-795 is the PTB element; the sequence is NPGF. Positions 803–805 match the PDZ-binding motif; it reads TSF.

It belongs to the peptidase M2 family. Homodimer. Interacts with the catalytically active form of TMPRSS2. Interacts with SLC6A19; this interaction is essential for expression and function of SLC6A19 in intestine. Interacts with ITGA5:ITGB1. Probably interacts (via endocytic sorting signal motif) with AP2M1; the interaction is inhibited by phosphorylation of Tyr-781. Interacts (via PDZ-binding motif) with NHERF1 (via PDZ domains); the interaction may enhance ACE2 membrane residence. As to quaternary structure, (Microbial infection) Interacts with SARS coronavirus/SARS-CoV spike protein. In terms of assembly, (Microbial infection) Interacts with SARS coronavirus-2/SARS-CoV-2 spike protein (via RBD domain). (Microbial infection) Interacts with human coronavirus NL63 spike protein. As to quaternary structure, (Microbial infection) Interacts with human coronavirus NL63/HCoV-NL63 spike glycoprotein. In terms of assembly, (Microbial infection) Interacts with SARS coronavirus-2/SARS-CoV-2 spike protein; the interaction is increased by AVP/Arg-vasopressin with which they may form a complex. The cofactor is Zn(2+). Chloride is required as a cofactor. In terms of processing, N-glycosylation on Asn-90 may limit SARS infectivity. Proteolytic cleavage by ADAM17 generates a secreted form. Also cleaved by serine proteases: TMPRSS2, TMPRSS11D and HPN/TMPRSS1. Post-translationally, phosphorylated. Phosphorylation at Tyr-781 probably inhibits interaction with AP2M1 and enables interactions with proteins containing SH2 domains. In terms of processing, ubiquitinated. Ubiquitinated on Lys-788 via 'Lys-48'-linked ubiquitin. 'Lys-48'-linked deubiquitinated by USP50 on the Lys-788; leading to its stabilization. In terms of tissue distribution, expressed in endothelial cells from small and large arteries, and in arterial smooth muscle cells (at protein level). Expressed in enterocytes of the small intestine, Leydig cells and Sertoli cells (at protein level). Expressed in the renal proximal tubule and the small intestine (at protein level). Expressed in heart, kidney, testis, and gastrointestinal system (at protein level). In lung, expressed at low levels in some alveolar type 2 cells, the expression seems to be individual-specific (at protein level). Expressed in nasal epithelial cells (at protein level). Coexpressed with TMPRSS2 within some lung alveolar type 2 cells, ileal absorptive enterocytes, intestinal epithelial cells, cornea, gallbladder and nasal goblet secretory cells. Coexpressed with TMPRSS4 within mature enterocytes. As to expression, expressed in nasal and bronchial epithelial cells (at protein level).

The protein localises to the secreted. It is found in the cell membrane. It localises to the cytoplasm. Its subcellular location is the cell projection. The protein resides in the cilium. The protein localises to the apical cell membrane. It catalyses the reaction angiotensin II + H2O = angiotensin-(1-7) + L-phenylalanine. The enzyme catalyses angiotensin I + H2O = angiotensin-(1-9) + L-leucine. It carries out the reaction bradykinin(1-8) + H2O = bradykinin(1-7) + L-phenylalanine. The catalysed reaction is neurotensin + H2O = neurotensin-(1-12) + L-leucine. It catalyses the reaction neurotensin-(1-8) + H2O = neurotensin-(1-7) + L-arginine. The enzyme catalyses kinetensin + H2O = kinetensin-(1-8) + L-leucine. It carries out the reaction dynorphin A-(1-13) + H2O = dynorphin A-(1-12) + L-lysine. The catalysed reaction is apelin-13 + H2O = apelin-12 + L-phenylalanine. It catalyses the reaction [Pyr1]apelin-13 + H2O = [Pyr1]apelin-12 + L-phenylalanine. The enzyme catalyses apelin-17 + H2O = apelin-16 + L-phenylalanine. It carries out the reaction beta-casomorphin-7 + H2O = beta-casomorphin-6 + L-isoleucine. The catalysed reaction is neocasomorphin + H2O = neocasomorphin-(1-5) + L-isoleucine. Its activity is regulated as follows. Regulated by chloride and fluoride, but not bromide. Chloride increases angiotensin I and decreases angiotensin II cleavage. Inhibited by MLN-4760, cFP_Leu, and EDTA, but not by the ACE inhibitors lisinopril, captopril and enalaprilat. Highly potent and selective in vitro ACE2 inhibitors were identified. Functionally, essential counter-regulatory carboxypeptidase of the renin-angiotensin hormone system that is a critical regulator of blood volume, systemic vascular resistance, and thus cardiovascular homeostasis. Converts angiotensin I to angiotensin 1-9, a nine-amino acid peptide with anti-hypertrophic effects in cardiomyocytes, and angiotensin II to angiotensin 1-7, which then acts as a beneficial vasodilator and anti-proliferation agent, counterbalancing the actions of the vasoconstrictor angiotensin II. Also removes the C-terminal residue from three other vasoactive peptides, neurotensin, kinetensin, and des-Arg bradykinin, but is not active on bradykinin. Also cleaves other biological peptides, such as apelins (apelin-13, [Pyr1]apelin-13, apelin-17, apelin-36), casomorphins (beta-casomorphin-7, neocasomorphin) and dynorphin A with high efficiency. In addition, ACE2 C-terminus is homologous to collectrin and is responsible for the trafficking of the neutral amino acid transporter SL6A19 to the plasma membrane of gut epithelial cells via direct interaction, regulating its expression on the cell surface and its catalytic activity. (Microbial infection) Acts as a receptor for human coronaviruses SARS-CoV and SARS-CoV-2, as well as human coronavirus NL63/HCoV-NL63. Its function is as follows. Non-functional as a carboxypeptidase. In terms of biological role, (Microbial infection) Non-functional as a receptor for human coronavirus SARS-CoV-2. The protein is Angiotensin-converting enzyme 2 of Homo sapiens (Human).